Here is a 240-residue protein sequence, read N- to C-terminus: UPF0309 protein in nagA 3'region (240 aa).

The 176-residue stretch at 31–206 folds into the SIS domain; that stretch reads IVKRLVQGGI…CAQIIEILHE (176 aa).

The protein belongs to the UPF0309 family.

The chain is UPF0309 protein in nagA 3'region from Lysinibacillus sphaericus (Bacillus sphaericus).